The following is a 122-amino-acid chain: Large ribosomal subunit protein uL18 (122 aa).

The protein belongs to the universal ribosomal protein uL18 family. In terms of assembly, part of the 50S ribosomal subunit; part of the 5S rRNA/L5/L18/L25 subcomplex. Contacts the 5S and 23S rRNAs.

Its function is as follows. This is one of the proteins that bind and probably mediate the attachment of the 5S RNA into the large ribosomal subunit, where it forms part of the central protuberance. The sequence is that of Large ribosomal subunit protein uL18 from Petrotoga mobilis (strain DSM 10674 / SJ95).